Here is a 252-residue protein sequence, read N- to C-terminus: Clc-like protein 2 (252 aa).

The next 4 helical transmembrane spans lie at 7 to 29 (YAIL…TPAW), 91 to 111 (LFHI…SFCV), 127 to 147 (VFLV…AVYS), and 173 to 193 (IALT…VHVL).

It belongs to the Clc family.

The protein resides in the membrane. The sequence is that of Clc-like protein 2 (clc-2) from Caenorhabditis elegans.